Reading from the N-terminus, the 290-residue chain is Hydroxyacylglutathione hydrolase-like protein (290 aa).

Zn(2+) contacts are provided by His54, His56, Asp58, His59, His110, Asp134, and His172.

This sequence belongs to the metallo-beta-lactamase superfamily. Glyoxalase II family. Requires Zn(2+) as cofactor.

Functionally, hydrolase acting on ester bonds. The sequence is that of Hydroxyacylglutathione hydrolase-like protein (HAGHL) from Homo sapiens (Human).